The sequence spans 199 residues: MEQSEEGQQQQQQGVMDYVPPHAYQSGPVNAASHMAFQQAHHFHHHHQQQQQQQLQMFWANQMQEIEHTTDFKNHTLPLARIKKIMKADEDVRMISAEAPVIFAKACEMFILELTLRAWIHTEENKRRTLQKNDIAAAISRTDVFDFLVDIIPRDELKEEGLGVTKGTIPSVVGSPPYYYLQQQGMMQHWPQEQHPDES.

The protein belongs to the NFYC/HAP5 subunit family. In terms of assembly, heterotrimeric transcription factor composed of three components, NF-YA, NF-YB and NF-YC. NF-YB and NF-YC must interact and dimerize for NF-YA association and DNA binding. Interacts with HTT1 in both cytoplasm and nucleus. In terms of tissue distribution, ubiquitous.

Its subcellular location is the nucleus. The protein localises to the cytoplasm. Functionally, stimulates the transcription of various genes by recognizing and binding to a CCAAT motif in promoters. The polypeptide is Nuclear transcription factor Y subunit C-2 (NFYC2) (Arabidopsis thaliana (Mouse-ear cress)).